Consider the following 1363-residue polypeptide: ABC multidrug transporter MDR2 (1363 aa).

The chain crosses the membrane as a helical span at residues 65–85 (IALIVIGTIAGIGAGIPFPLL). Residues 69–367 (VIGTIAGIGA…MAPFMHIFAS (299 aa)) form the ABC transmembrane type-1 1 domain. Asparagine 97 is a glycosylation site (N-linked (GlcNAc...) asparagine). 5 consecutive transmembrane segments (helical) span residues 119–139 (VLQV…HTGC), 193–213 (KVGL…VAFL), 215–235 (VATI…MAFG), 301–321 (IQFG…FWQG), and 336–356 (VSVG…FVLS). The ABC transporter 1 domain occupies 403 to 682 (IELQDVTFNY…DGVYAGMVRL (280 aa)). Position 438-445 (438-445 (GTSGSGKS)) interacts with ATP. Residues asparagine 552 and asparagine 633 are each glycosylated (N-linked (GlcNAc...) asparagine). Residues 738–758 (YMPEEADSLPTEPENEKEKPK) form a disordered region. The next 3 helical transmembrane spans lie at 781 to 801 (LGLI…VIFG), 820 to 840 (GMLF…AVIV), and 896 to 916 (LTGT…AGVI). The ABC transmembrane type-1 2 domain maps to 781–1052 (LGLITSIMIG…MFALVPDISK (272 aa)). Asparagine 973 carries an N-linked (GlcNAc...) asparagine glycan. 2 helical membrane passes run 992 to 1012 (FWLS…YWWG) and 1016 to 1036 (ILAG…LLFS). Residues 1119–1358 (VQFRNVHFRY…CESYRANVIH (240 aa)) form the ABC transporter 2 domain. ATP is bound at residue 1154-1161 (GPSGSGKS).

The protein belongs to the ABC transporter superfamily. ABCB family. Multidrug resistance exporter (TC 3.A.1.201) subfamily.

It localises to the cell membrane. In terms of biological role, pleiotropic ABC efflux transporter that may be involved in the modulation susceptibility to a wide range of unrelated cytotoxic compounds. This is ABC multidrug transporter MDR2 from Trichophyton tonsurans (strain CBS 112818) (Scalp ringworm fungus).